Consider the following 127-residue polypeptide: Large ribosomal subunit protein bL19 (127 aa).

This sequence belongs to the bacterial ribosomal protein bL19 family.

Functionally, this protein is located at the 30S-50S ribosomal subunit interface and may play a role in the structure and function of the aminoacyl-tRNA binding site. The polypeptide is Large ribosomal subunit protein bL19 (Synechococcus sp. (strain JA-3-3Ab) (Cyanobacteria bacterium Yellowstone A-Prime)).